Reading from the N-terminus, the 839-residue chain is LPS-assembly protein LptD (839 aa).

The first 21 residues, 1 to 21 (MAIGITACVLSLINYQGLAYS), serve as a signal peptide directing secretion.

This sequence belongs to the LptD family. Component of the lipopolysaccharide transport and assembly complex. Interacts with LptE and LptA.

The protein localises to the cell outer membrane. Its function is as follows. Together with LptE, is involved in the assembly of lipopolysaccharide (LPS) at the surface of the outer membrane. This chain is LPS-assembly protein LptD, found in Legionella pneumophila (strain Paris).